The sequence spans 316 residues: Acetyl-coenzyme A carboxylase carboxyl transferase subunit beta (316 aa).

In terms of domain architecture, CoA carboxyltransferase N-terminal spans 39-308 (LWHKCSKCGV…TPPMVLWETM (270 aa)). Zn(2+) contacts are provided by C43, C46, C62, and C65. Residues 43–65 (CSKCGVLTYTKDLRANQMVCVEC) form a C4-type zinc finger.

This sequence belongs to the AccD/PCCB family. Acetyl-CoA carboxylase is a heterohexamer composed of biotin carboxyl carrier protein (AccB), biotin carboxylase (AccC) and two subunits each of ACCase subunit alpha (AccA) and ACCase subunit beta (AccD). Zn(2+) is required as a cofactor.

The protein localises to the cytoplasm. The catalysed reaction is N(6)-carboxybiotinyl-L-lysyl-[protein] + acetyl-CoA = N(6)-biotinyl-L-lysyl-[protein] + malonyl-CoA. It functions in the pathway lipid metabolism; malonyl-CoA biosynthesis; malonyl-CoA from acetyl-CoA: step 1/1. In terms of biological role, component of the acetyl coenzyme A carboxylase (ACC) complex. Biotin carboxylase (BC) catalyzes the carboxylation of biotin on its carrier protein (BCCP) and then the CO(2) group is transferred by the transcarboxylase to acetyl-CoA to form malonyl-CoA. This chain is Acetyl-coenzyme A carboxylase carboxyl transferase subunit beta, found in Trichormus variabilis (strain ATCC 29413 / PCC 7937) (Anabaena variabilis).